Reading from the N-terminus, the 406-residue chain is Terminal uridylyltransferase 7 (406 aa).

Residues 1–15 (MNVAKREFIRGMMAH) constitute a mitochondrion transit peptide. UTP-binding positions include Ser-54 and 64-65 (SD). The Mg(2+) site is built by Asp-65 and Asp-67. UTP is bound by residues 138–142 (GVENS), Lys-164, Lys-168, and 181–183 (NSF).

Belongs to the DNA polymerase type-B-like family. As to quaternary structure, component of the mitochondrial RNA editing core complex-like (RECC-like), also known as the editosome-like complex; only a small proportion of MEAT1 associates with the complex. Interacts with RNA-editing ligase REL1. The cofactor is Mg(2+).

It localises to the mitochondrion matrix. It catalyses the reaction RNA(n) + UTP = RNA(n)-3'-uridine ribonucleotide + diphosphate. In terms of biological role, terminal uridylyltransferase which, as part of the mitochondrial RNA editing core-like complex (RECC-like), is involved in the post-transcriptional editing of mitochondrial RNA, a process involving the addition and deletion of uridine (U) nucleotides in the pre-mRNA. Specifically, catalyzes the addition of U to single-stranded RNA with a preference for a 3'-terminal U and adds the number of Us specified by a guide RNA (gRNA) to precleaved double-stranded RNA editing substrates. Essential for insect and bloodstream developmental forms viability. This Trypanosoma brucei brucei protein is Terminal uridylyltransferase 7.